Reading from the N-terminus, the 534-residue chain is Autophagic-related protein 16.2 (534 aa).

7 WD repeats span residues 243 to 281, 288 to 329, 330 to 368, 371 to 411, 413 to 452, 459 to 498, and 504 to 534; these read THDG…TDAS, GCLG…STFS, GHTD…CLKS, VGST…ATYS, ELGQ…IIHL, KTSC…LEKV, and SDSA…TLWR.

Belongs to the WD repeat tipD family. As to quaternary structure, homodimer (via N-terminus). Most likely a component of a complex at least containing atg-5, lgg-3, atg-16.1 and/or atg-16.2. Interacts (via N-terminus) with atg-16.1 (via N-terminus). Interacts (via N-terminus) with atg-5. Interacts (via WD 5-6 repeats) with lgg-2; the interaction is direct. In terms of tissue distribution, expressed in neurons, pharyngeal muscles, body wall muscle cells and intestinal cells.

It localises to the cytoplasm. The protein resides in the cell membrane. In terms of biological role, most likely a component of the atg-5-atg-12-atg-16.1/atg-16.2 complex, which is recruited to the preautophagosomal membrane and associates with lgg-2 to promote autophagosome formation. Plays a role in the recruitment of lipidated lgg-1 probably to the autophagosome membrane to promote autophagosome formation. Furthermore, association with atg-5 is required for the nucleation of lgg-1 positive autophagosomes. Although its role in autophagosome formation may be distinct to the role of atg-16.2, it functions in a partially redundant manner with atg-16.1 to regulate autophagic processes. In a daf-18/PTEN- and daf-16/FOXO-dependent manner, required for maintaining the numbers of germ stem cell progenitors in the gonad during the late phases of larval development. This chain is Autophagic-related protein 16.2, found in Caenorhabditis elegans.